The following is a 198-amino-acid chain: Glycerol-3-phosphate acyltransferase (198 aa).

5 helical membrane passes run 6–26 (FLPVALIIGYLFGSIPFGLIL), 55–75 (GLAAGTLLGDALKGTAAVIIS), 83–103 (AAMIAGLGAFLGHLFPVWLKF), 113–133 (IGILIGLFWPGAIFFCLVWLA), and 154–174 (IVLWAFGHTALAALFALLTLL).

This sequence belongs to the PlsY family. In terms of assembly, probably interacts with PlsX.

The protein resides in the cell inner membrane. The enzyme catalyses an acyl phosphate + sn-glycerol 3-phosphate = a 1-acyl-sn-glycero-3-phosphate + phosphate. Its pathway is lipid metabolism; phospholipid metabolism. Functionally, catalyzes the transfer of an acyl group from acyl-phosphate (acyl-PO(4)) to glycerol-3-phosphate (G3P) to form lysophosphatidic acid (LPA). This enzyme utilizes acyl-phosphate as fatty acyl donor, but not acyl-CoA or acyl-ACP. This chain is Glycerol-3-phosphate acyltransferase, found in Bradyrhizobium sp. (strain BTAi1 / ATCC BAA-1182).